The primary structure comprises 214 residues: Dual specificity phosphatase 29 (214 aa).

The 149-residue stretch at 46–194 (HVNEVWPNLY…LRELDIELAL (149 aa)) folds into the Tyrosine-protein phosphatase domain. 138–145 (HCAMGRSR) is a substrate binding site. The active-site Phosphocysteine intermediate is Cys-139.

This sequence belongs to the protein-tyrosine phosphatase family. Non-receptor class dual specificity subfamily.

It localises to the cytoplasm. Its subcellular location is the nucleus. It carries out the reaction O-phospho-L-tyrosyl-[protein] + H2O = L-tyrosyl-[protein] + phosphate. It catalyses the reaction O-phospho-L-seryl-[protein] + H2O = L-seryl-[protein] + phosphate. The catalysed reaction is O-phospho-L-threonyl-[protein] + H2O = L-threonyl-[protein] + phosphate. Functionally, dual specificity phosphatase able to dephosphorylate phosphotyrosine, phosphoserine and phosphothreonine residues within the same substrate, with a preference for phosphotyrosine as a substrate. Involved in the modulation of AMPK and MAPK1/2 signaling pathways. The sequence is that of Dual specificity phosphatase 29 (DUSP29) from Gallus gallus (Chicken).